Reading from the N-terminus, the 318-residue chain is Ribosomal RNA small subunit methyltransferase H (318 aa).

S-adenosyl-L-methionine contacts are provided by residues 37-39, Asp-57, Phe-83, Asp-104, and Gln-111; that span reads GGH.

It belongs to the methyltransferase superfamily. RsmH family.

The protein resides in the cytoplasm. The enzyme catalyses cytidine(1402) in 16S rRNA + S-adenosyl-L-methionine = N(4)-methylcytidine(1402) in 16S rRNA + S-adenosyl-L-homocysteine + H(+). In terms of biological role, specifically methylates the N4 position of cytidine in position 1402 (C1402) of 16S rRNA. The polypeptide is Ribosomal RNA small subunit methyltransferase H (Neisseria gonorrhoeae (strain NCCP11945)).